Reading from the N-terminus, the 124-residue chain is Large ribosomal subunit protein bL12 (124 aa).

It belongs to the bacterial ribosomal protein bL12 family. Homodimer. Part of the ribosomal stalk of the 50S ribosomal subunit. Forms a multimeric L10(L12)X complex, where L10 forms an elongated spine to which 2 to 4 L12 dimers bind in a sequential fashion. Binds GTP-bound translation factors.

Functionally, forms part of the ribosomal stalk which helps the ribosome interact with GTP-bound translation factors. Is thus essential for accurate translation. The chain is Large ribosomal subunit protein bL12 from Vesicomyosocius okutanii subsp. Calyptogena okutanii (strain HA).